The primary structure comprises 356 residues: MMRPQPPLFRPSIPMPHGLGDREAAILREIVEEYVETGEPIGSQTLAQRLQPSLSPATIRNVMAELARAGLLFSPHVSAGRLPTEKGVRLFVDGLLQFSSLTEEDRASIDSRLDIHGRSYQDILSEASSLLSGLSSAAGLVLAPKSDATLKHIEFVALGPGRVLVILVGSDGQVENRIIETPPGVPPSALVEAGNYLNSRLGDLTLGNLRERVRAEMDASRHELDALTASVIESGLATWDADGGTLFVKGQGKLLADITEIERLTTIRMLFDHLETQETMLQLLQLADASEGVRIYIGRESGMFGMSGVSMIVAPARNEAQKIVGAIGVIGPTRLNYGRIVPVVDYTARMVGRLLG.

This sequence belongs to the HrcA family.

In terms of biological role, negative regulator of class I heat shock genes (grpE-dnaK-dnaJ and groELS operons). Prevents heat-shock induction of these operons. The sequence is that of Heat-inducible transcription repressor HrcA from Gluconobacter oxydans (strain 621H) (Gluconobacter suboxydans).